The sequence spans 395 residues: Serine/threonine-protein kinase BIK1 (395 aa).

G2 carries the N-myristoyl glycine lipid modification. The S-palmitoyl cysteine moiety is linked to residue C4. S26 carries the post-translational modification Phosphoserine. K31 is covalently cross-linked (Glycyl lysine isopeptide (Lys-Gly) (interchain with G-Cter in ubiquitin)). 3 positions are modified to phosphoserine: S32, S33, and S34. T35 is subject to Phosphothreonine. K41 is covalently cross-linked (Glycyl lysine isopeptide (Lys-Gly) (interchain with G-Cter in ubiquitin)). The residue at position 42 (T42) is a Phosphothreonine. A Phosphoserine; by autocatalysis and BAK1 modification is found at S48. Residue T50 is modified to Phosphothreonine. Phosphoserine; by autocatalysis is present on S54. T56 is modified (phosphothreonine; by autocatalysis). T64 carries the phosphothreonine modification. Positions 67–356 (FRPDSVIGEG…RALQQLQDNL (290 aa)) constitute a Protein kinase domain. S71 carries the phosphoserine; by autocatalysis and BAK1 modification. 73–81 (IGEGGFGCV) serves as a coordination point for ATP. S89 carries the post-translational modification Phosphoserine; by EFR. The short motif at 89 to 90 (ST) is the Required for physical interaction with and phosphorylation of downstream signaling proteins (e.g. WRKY33, WRKY50, WRKY51 and WRKY57) to activate EFR-mediated immune signaling element. T90 is subject to Phosphothreonine; by EFR. K95 is covalently cross-linked (Glycyl lysine isopeptide (Lys-Gly) (interchain with G-Cter in ubiquitin)). K105 is a binding site for ATP. Phosphothreonine; by EFR is present on T120. S129 is modified (phosphoserine; by autocatalysis). Residue S129 is modified to Phosphoserine; by EFR. Y150 is modified (phosphotyrosine). A Phosphotyrosine; by autocatalysis modification is found at Y168. Residues K170 and K186 each participate in a glycyl lysine isopeptide (Lys-Gly) (interchain with G-Cter in ubiquitin) cross-link. At S193 the chain carries Phosphoserine. D202 functions as the Proton acceptor in the catalytic mechanism. S206 bears the Phosphoserine; by autocatalysis and BAK1 mark. Y214 is subject to Phosphotyrosine; by autocatalysis. Phosphoserine is present on S219. The residue at position 233 (S233) is a Phosphoserine; by autocatalysis. S236 carries the O-UMP-serine; by Xanthomonas campestris effector XopAC/AvrAC; alternate modification. Phosphoserine; by autocatalysis and BAK1; alternate is present on S236. O-UMP-threonine; by Xanthomonas campestris effector XopAC/AvrAC; alternate is present on T237. A Phosphothreonine; by autocatalysis and BAK1; alternate modification is found at T237. The residue at position 242 (T242) is a Phosphothreonine; by autocatalysis and BAK1. A Phosphotyrosine modification is found at Y243. Y250 carries the post-translational modification Phosphotyrosine; by autocatalysis. 2 positions are modified to phosphoserine; by autocatalysis: S252 and S253. Residue K286 forms a Glycyl lysine isopeptide (Lys-Gly) (interchain with G-Cter in ubiquitin) linkage. T314 is modified (phosphothreonine; by autocatalysis). Residue K337 forms a Glycyl lysine isopeptide (Lys-Gly) (interchain with G-Cter in ubiquitin) linkage. Position 341 is a phosphothreonine (T341). Polar residues predominate over residues 354-365 (DNLGKPSQTNPV). The tract at residues 354 to 395 (DNLGKPSQTNPVKDTKKLGFKTGTTKSSEKRFTQKPFGRHLV) is disordered. K358 is covalently cross-linked (Glycyl lysine isopeptide (Lys-Gly) (interchain with G-Cter in ubiquitin)). Phosphoserine; by autocatalysis and BAK1 is present on S360. T362 bears the Phosphothreonine; by autocatalysis and BAK1 mark. Residue K366 forms a Glycyl lysine isopeptide (Lys-Gly) (interchain with G-Cter in ubiquitin) linkage. Phosphothreonine; by autocatalysis and BAK1 is present on T368. Phosphothreonine occurs at positions 375 and 377.

The protein belongs to the protein kinase superfamily. Ser/Thr protein kinase family. Interacts with FLS2. Activation of FLS2 by flagellin (flg22) induces the dissociation of the complex. Interacts with BAK1. Interacts with the Xanthomonas campestris effector XopAC/AvrAC. Interacts with CPK28. Interacts with PEPR1. Interacts with PP2C38. Interacts with BRI1. Interacts with RBOHD. Binds to EFR when not phosphorylated at Ser-89 and Thr-90, in the absence of pathogen elicitor; dissociates upon pathogen-associated molecular pattern (PAMP)-triggered activation by EFR-mediated phosphorylation. Interacts directly with and phosphorylates WRKY transcription factors in the nucleus involved in the jasmonic acid (JA) and salicylic acid (SA) regulation (e.g. WRKY33, WRKY50, WRKY51 and WRKY57) to modulate defense hormones during plant immunity. Binds to ATL44/RHA3A and ATL45/RHA3B. Binds to SIK1 to be phosphorylated and stabilized. Phosphorylated by SIK1 to be stabilized. Phosphorylated by FLS2 and BAK1. Autophosphorylated. Autophosphorylation is reduced in presence of the Xanthomonas campestris effector XopAC/AvrAC. Phosphorylated, especially by EFR at Ser-89 and Thr-90, in response to the microbe-associated molecular pattern (MAMP) flg22. Phosphorylation in response to flg22 is abolished in presence of the Xanthomonas campestris effector XopAC/AvrAC. Phosphorylated at Ser-233, Ser-236 and Thr-237 by PEPR1. Phosphorylated at Tyr-150, Tyr-243 and Tyr-250. Tyrosine phosphorylation is required for BIK1 function in plant innate immunity. Post-translationally, uridylylated at Ser-236 and Thr-237 by the Xanthomonas campestris effector XopAC/AvrAC. This conceals conserved phosphorylation sites in the activation loop, reducing BIK1 kinase activity and consequently inhibiting downstream signaling. In terms of processing, monoubiquitinated by ATL44/RHA3A and ATL45/RHA3B following phosphorylation upon the recognition of microbe-associated molecular patterns (MAMPs, e.g. flg22) by pattern recognition receptors (PRRs), then released from the FLS2/BAK1 complex and internalized dynamically into endocytic compartments followed by the activation of immune signaling.

Its subcellular location is the cell membrane. It localises to the endosome membrane. The protein resides in the nucleus. The enzyme catalyses L-seryl-[protein] + ATP = O-phospho-L-seryl-[protein] + ADP + H(+). It catalyses the reaction L-threonyl-[protein] + ATP = O-phospho-L-threonyl-[protein] + ADP + H(+). With respect to regulation, kinase activation is repressed by the phosphatase PP2C38. Plays a central role in immune responses. Required to activate the resistance responses to necrotrophic pathogens, including the regulation of defense hormone expression (e.g. jasmonic acid (JA) and salicylic acid (SA)). Phosphorylates FLS2 and BAK1. Involved in pathogen-associated molecular pattern (PAMP)-triggered immunity (PTI) signaling, including calcium signaling, and defense responses downstream of FLS2; upon PAMP recognition, first phosphorylated by FLS2 and SIK1 prior to being monoubiquitinated by ATL44/RHA3A and ATL45/RHA3B at the plasma membrane, then internalized dynamically into endocytic compartments together with FLS2. Acts additively with PBL1 in PTI defenses. Acts as a positive regulator of the PAMP flg22-induced increase of cytosolic calcium. Upon flg22 perception, phosphorylates and activates the calcium-permeable channel OSCA1.3, promoting stomatal closure. Phosphorylates the NADPH oxidase RBOHD at specific sites in a calcium-independent manner to enhance reactive oxygen species (ROS) generation upon flg22 perception. ROS production in response to flg22 controls stomatal movement and restriction of bacterial entry into leaf tissues. Seems not required for flg22-induced MAPK activation. Required for Pep1-induced defenses. Pep1 is an endogenous elicitor that potentiates PAMP-inducible plant responses. In association with PEPR1, acts downstream of the canonical ethylene signaling cascade to regulate ethylene responses. Involved in ethylene signaling. Destabilizes EIN3, the key transcription activator in ethylene signaling, and represses EIN3-dependent transcription. Acts as a negative regulator in brassinosteroid (BR) signaling. Functions in BR signaling by direct interaction with the BR receptor BRI1 cytosolic kinase domain. Required during SCOOP small peptides (e.g. SCOOP10 and SCOOP12) perception and signaling; receptor-like cytosolic kinases (RLCK) activated by BAK1/SERK3 and SERK4 coreceptors when associated with MIK2 upon the perception of SCOOP peptides. Functionally, (Microbial infection) Xanthomonas campestris effector AvrAC/XopAC-mediated uridylylation prevents activation by phosphorylation at the same residues, thus affecting immune responses and reducing defense responses toward X.campestris, mediating avrAC/XopAC virulence functions. The sequence is that of Serine/threonine-protein kinase BIK1 from Arabidopsis thaliana (Mouse-ear cress).